A 248-amino-acid chain; its full sequence is 3-deoxy-manno-octulosonate cytidylyltransferase (248 aa).

Belongs to the KdsB family.

It localises to the cytoplasm. The enzyme catalyses 3-deoxy-alpha-D-manno-oct-2-ulosonate + CTP = CMP-3-deoxy-beta-D-manno-octulosonate + diphosphate. The protein operates within nucleotide-sugar biosynthesis; CMP-3-deoxy-D-manno-octulosonate biosynthesis; CMP-3-deoxy-D-manno-octulosonate from 3-deoxy-D-manno-octulosonate and CTP: step 1/1. It participates in bacterial outer membrane biogenesis; lipopolysaccharide biosynthesis. Functionally, activates KDO (a required 8-carbon sugar) for incorporation into bacterial lipopolysaccharide in Gram-negative bacteria. This is 3-deoxy-manno-octulosonate cytidylyltransferase from Shigella dysenteriae serotype 1 (strain Sd197).